Consider the following 431-residue polypeptide: Adenylosuccinate synthetase (431 aa).

GTP-binding positions include 12–18 (GDEGKGK) and 40–42 (GHT). The active-site Proton acceptor is Asp13. Residues Asp13 and Gly40 each coordinate Mg(2+). IMP contacts are provided by residues 13–16 (DEGK), 38–41 (NAGH), Thr130, Arg144, Gln225, Thr240, and Arg304. His41 serves as the catalytic Proton donor. 300–306 (STTGRPR) is a substrate binding site. GTP-binding positions include Arg306, 332–334 (KMD), and 414–416 (SIG).

This sequence belongs to the adenylosuccinate synthetase family. In terms of assembly, homodimer. It depends on Mg(2+) as a cofactor.

It is found in the cytoplasm. It catalyses the reaction IMP + L-aspartate + GTP = N(6)-(1,2-dicarboxyethyl)-AMP + GDP + phosphate + 2 H(+). The protein operates within purine metabolism; AMP biosynthesis via de novo pathway; AMP from IMP: step 1/2. Plays an important role in the de novo pathway of purine nucleotide biosynthesis. Catalyzes the first committed step in the biosynthesis of AMP from IMP. This chain is Adenylosuccinate synthetase, found in Syntrophotalea carbinolica (strain DSM 2380 / NBRC 103641 / GraBd1) (Pelobacter carbinolicus).